The chain runs to 382 residues: MAKDDYYELLGVQKGASEEELKKAYRKKAVQYHPDKNPGNKEAEEMFKKISHAYEVLKDPEKRAAYDRYGPAAFEGAGAGAGMGGMRGGGGFHDPFDIFREVFGQQGGMGGGIFEEMFGGGRGGGGQDGADLRYDLEITLEEAARGAEKEISFRKLVACERCDGSGAEPGSKRVTCPTCRGAGQVRRSGGIITFTQTCPTCGGMGTKIEKPCTVCHGEGRVRRTTKLNVRIPPGVDNGSRLRSSGNGEAGVAGGQNGDLYIVISVQEHELFERQGDDLFCEIPIKFTLATLGGTIEVPTLFGKASLKIPVGTQSGTTFRLRDKGMPSLRGGRQGDQLVRVHVEVPQSLTPEQRKILEDFARVSGDASEPTSRSFFEKAKKFF.

Residues 5–70 (DYYELLGVQK…EKRAAYDRYG (66 aa)) enclose the J domain. A CR-type zinc finger spans residues 146 to 224 (GAEKEISFRK…CHGEGRVRRT (79 aa)). Residues C159, C162, C176, C179, C198, C201, C212, and C215 each contribute to the Zn(2+) site. CXXCXGXG motif repeat units lie at residues 159–166 (CERCDGSG), 176–183 (CPTCRGAG), 198–205 (CPTCGGMG), and 212–219 (CTVCHGEG). A disordered region spans residues 230–250 (RIPPGVDNGSRLRSSGNGEAG).

Belongs to the DnaJ family. In terms of assembly, homodimer. Zn(2+) is required as a cofactor.

It localises to the cytoplasm. Its function is as follows. Participates actively in the response to hyperosmotic and heat shock by preventing the aggregation of stress-denatured proteins and by disaggregating proteins, also in an autonomous, DnaK-independent fashion. Unfolded proteins bind initially to DnaJ; upon interaction with the DnaJ-bound protein, DnaK hydrolyzes its bound ATP, resulting in the formation of a stable complex. GrpE releases ADP from DnaK; ATP binding to DnaK triggers the release of the substrate protein, thus completing the reaction cycle. Several rounds of ATP-dependent interactions between DnaJ, DnaK and GrpE are required for fully efficient folding. Also involved, together with DnaK and GrpE, in the DNA replication of plasmids through activation of initiation proteins. This is Chaperone protein DnaJ from Opitutus terrae (strain DSM 11246 / JCM 15787 / PB90-1).